A 496-amino-acid chain; its full sequence is MIDLKQYEFWFLVGSQYLYGLETLKKVEQQASKIVDSLNDDPIFPSKIVLKPVLKSSSEITEIFEKANADPKCAGVIVWMHTFSPSKMWIRGLSINKKPLLHLHTQYNREIPWDTIDMDYMNLNQSAHGDREHGFIHARMRLPRKVVVGHWEEKEVREKIAKWMRVACAIQDGRMGQIVRFGDNMREVASTEGDKVEAQIKLGWSINTWGVGELAERVKAVPEREVEELLKEYREKYIMPEDEYSLKAIREQAKIEIALREFLKEKNAVGFTTTFEDLHDLPQLPGLAVQRLMEEGYGFGAEGDWKAAGLVRAIKVMGTSLPGGTSFMEDYTYHLTPGNELVLGAHMLEVCPTIAKEKPRIEVHPLSIGGKADPARLVFDGQEGPAVNASIVDMGNRFRLVVNKVLSVPIERKMPKLPTARVLWKPLPDFKRATTAWILAGGSHHTAFSTAIDVEYLIDWAEALEIEYVVIDENLDLEDFKKELRWNELYWGLLKR.

Mn(2+) contacts are provided by Glu-302, Glu-329, His-346, and His-445.

The protein belongs to the arabinose isomerase family. Mn(2+) serves as cofactor.

It catalyses the reaction beta-L-arabinopyranose = L-ribulose. Its pathway is carbohydrate degradation; L-arabinose degradation via L-ribulose; D-xylulose 5-phosphate from L-arabinose (bacterial route): step 1/3. Functionally, catalyzes the conversion of L-arabinose to L-ribulose. This Thermotoga maritima (strain ATCC 43589 / DSM 3109 / JCM 10099 / NBRC 100826 / MSB8) protein is L-arabinose isomerase.